Here is a 212-residue protein sequence, read N- to C-terminus: Methylthioribulose-1-phosphate dehydratase (212 aa).

His-97 and His-99 together coordinate Zn(2+).

It belongs to the aldolase class II family. MtnB subfamily. In terms of assembly, homotetramer. Requires Zn(2+) as cofactor.

It carries out the reaction 5-(methylsulfanyl)-D-ribulose 1-phosphate = 5-methylsulfanyl-2,3-dioxopentyl phosphate + H2O. It participates in amino-acid biosynthesis; L-methionine biosynthesis via salvage pathway; L-methionine from S-methyl-5-thio-alpha-D-ribose 1-phosphate: step 2/6. In terms of biological role, catalyzes the dehydration of methylthioribulose-1-phosphate (MTRu-1-P) into 2,3-diketo-5-methylthiopentyl-1-phosphate (DK-MTP-1-P). In Bacillus cereus (strain ATCC 10987 / NRS 248), this protein is Methylthioribulose-1-phosphate dehydratase.